Here is a 254-residue protein sequence, read N- to C-terminus: Anti-sigma-M factor RsmA (254 aa).

Residues methionine 1–arginine 112 are Cytoplasmic-facing. Residues methionine 113 to valine 133 traverse the membrane as a helical segment. Residues aspartate 134–alanine 254 are Extracellular-facing.

Interacts with ECF RNA polymerase sigma factor SigM; this should inhibit the interaction of SigM with the RNA polymerase catalytic core. Probably cleaved within the membrane by Rip1 near the cytoplasmic membrane interface.

It localises to the cell membrane. In terms of biological role, an anti-sigma factor for extracytoplasmic function (ECF) sigma factor SigM. ECF sigma factors are held in an inactive form by an anti-sigma factor until released by regulated intramembrane proteolysis (RIP). RIP occurs when an extracytoplasmic signal triggers a concerted proteolytic cascade to transmit information and elicit cellular responses. The membrane-spanning regulatory substrate protein is first cut extracytoplasmically (site-1 protease, S1P), then within the membrane itself (site-2 protease, S2P, Rip1), while cytoplasmic proteases finish degrading the regulatory protein, liberating the sigma factor. The chain is Anti-sigma-M factor RsmA (rsmA) from Mycobacterium tuberculosis (strain ATCC 35801 / TMC 107 / Erdman).